A 306-amino-acid polypeptide reads, in one-letter code: Probable GTP 3',8-cyclase (306 aa).

One can recognise a Radical SAM core domain in the interval 5–232 (RFGRPVTNLR…RRRKYFLPVD (228 aa)). A GTP-binding site is contributed by R14. 2 residues coordinate [4Fe-4S] cluster: C21 and C25. Y27 is a binding site for S-adenosyl-L-methionine. C28 provides a ligand contact to [4Fe-4S] cluster. K61 lines the GTP pocket. Residue G65 participates in S-adenosyl-L-methionine binding. Residue T90 participates in GTP binding. S114 contributes to the S-adenosyl-L-methionine binding site. Residue K150 coordinates GTP. M189 is a binding site for S-adenosyl-L-methionine. [4Fe-4S] cluster-binding residues include C250 and C253. 255 to 257 (RLR) provides a ligand contact to GTP. Position 267 (C267) interacts with [4Fe-4S] cluster.

The protein belongs to the radical SAM superfamily. MoaA family. It depends on [4Fe-4S] cluster as a cofactor.

The catalysed reaction is GTP + AH2 + S-adenosyl-L-methionine = (8S)-3',8-cyclo-7,8-dihydroguanosine 5'-triphosphate + 5'-deoxyadenosine + L-methionine + A + H(+). The protein operates within cofactor biosynthesis; molybdopterin biosynthesis. In terms of biological role, catalyzes the cyclization of GTP to (8S)-3',8-cyclo-7,8-dihydroguanosine 5'-triphosphate. This chain is Probable GTP 3',8-cyclase, found in Pyrococcus abyssi (strain GE5 / Orsay).